Here is a 173-residue protein sequence, read N- to C-terminus: Large ribosomal subunit protein bL9 (173 aa).

Positions 150-173 (KQEDKKSLSKKLNKADEQGERAEV) are disordered.

This sequence belongs to the bacterial ribosomal protein bL9 family.

In terms of biological role, binds to the 23S rRNA. The chain is Large ribosomal subunit protein bL9 from Borreliella burgdorferi (strain ZS7) (Borrelia burgdorferi).